The chain runs to 49 residues: U-theraphotoxin-Lk2a (49 aa).

4 cysteine pairs are disulfide-bonded: C4–C17, C8–C41, C22–C24, and C35–C46.

The protein belongs to the neurotoxin 12 (Hwtx-2) family. 04 (lasiotoxin) subfamily. As to expression, expressed by the venom gland.

It is found in the secreted. Toxin that causes irreversible contractile paralysis into adult Aedes aegypti resulting in 100% mortality after 24 hours. The polypeptide is U-theraphotoxin-Lk2a (Lasiodora klugi (Bahia scarlet tarantula)).